Reading from the N-terminus, the 220-residue chain is Cytidylate kinase (220 aa).

11-19 (GPTASGKGT) lines the ATP pocket.

It belongs to the cytidylate kinase family. Type 1 subfamily.

Its subcellular location is the cytoplasm. The catalysed reaction is CMP + ATP = CDP + ADP. It catalyses the reaction dCMP + ATP = dCDP + ADP. This Polynucleobacter asymbioticus (strain DSM 18221 / CIP 109841 / QLW-P1DMWA-1) (Polynucleobacter necessarius subsp. asymbioticus) protein is Cytidylate kinase.